The chain runs to 198 residues: Protein GrpE (198 aa).

Positions 1-14 (MSNEENKINEEALK) are enriched in basic and acidic residues. The disordered stretch occupies residues 1-20 (MSNEENKINEEALKQQDAAE).

Belongs to the GrpE family. Homodimer.

It localises to the cytoplasm. Functionally, participates actively in the response to hyperosmotic and heat shock by preventing the aggregation of stress-denatured proteins, in association with DnaK and GrpE. It is the nucleotide exchange factor for DnaK and may function as a thermosensor. Unfolded proteins bind initially to DnaJ; upon interaction with the DnaJ-bound protein, DnaK hydrolyzes its bound ATP, resulting in the formation of a stable complex. GrpE releases ADP from DnaK; ATP binding to DnaK triggers the release of the substrate protein, thus completing the reaction cycle. Several rounds of ATP-dependent interactions between DnaJ, DnaK and GrpE are required for fully efficient folding. This is Protein GrpE from Vibrio vulnificus (strain YJ016).